The chain runs to 213 residues: MTSLRYWDISPALDPNTPTWPGDTPFQQEWAARLDEQCPVNVGRITLSPHTGAHVDGPLHYRADGLPIGQVPLDIYMGPCRVIHCIGANPLVTPEHLAGQLDDLPSRVLLRTFERVPANWPEGFCAIAPATIECLAERGVRLVGIDTPSLDPQHSKTLDAHHAVGRHGMAILEGVVLDDVPAGDYELLALPLKFTHLDASPVRAVLRALPTAE.

Position 20 (tryptophan 20) interacts with substrate. Zn(2+) contacts are provided by histidine 50, histidine 54, and aspartate 56. The Proton donor/acceptor role is filled by histidine 60. Zn(2+) is bound by residues histidine 161 and glutamate 173.

Belongs to the Cyclase 1 superfamily. KynB family. As to quaternary structure, homodimer. It depends on Zn(2+) as a cofactor.

It catalyses the reaction N-formyl-L-kynurenine + H2O = L-kynurenine + formate + H(+). The protein operates within amino-acid degradation; L-tryptophan degradation via kynurenine pathway; L-kynurenine from L-tryptophan: step 2/2. Functionally, catalyzes the hydrolysis of N-formyl-L-kynurenine to L-kynurenine, the second step in the kynurenine pathway of tryptophan degradation. This chain is Kynurenine formamidase, found in Pseudomonas aeruginosa (strain ATCC 15692 / DSM 22644 / CIP 104116 / JCM 14847 / LMG 12228 / 1C / PRS 101 / PAO1).